Here is a 131-residue protein sequence, read N- to C-terminus: Snaclec A13 (131 aa).

3 disulfide bridges follow: Cys4–Cys15, Cys32–Cys125, and Cys100–Cys117. The region spanning 11 to 126 (YEGHCYKVFN…CELAYHFICM (116 aa)) is the C-type lectin domain.

This sequence belongs to the snaclec family. As to quaternary structure, heterodimer; disulfide-linked. Expressed by the venom gland.

It is found in the secreted. In terms of biological role, interferes with one step of hemostasis (modulation of platelet aggregation, or coagulation cascade, for example). The sequence is that of Snaclec A13 from Macrovipera lebetinus (Levantine viper).